Here is a 1115-residue protein sequence, read N- to C-terminus: Gamma tubulin complex adapter mto1 (1115 aa).

Positions 25–180 are disordered; sequence LTDEEVRRIL…NYISSSLDQL (156 aa). Composition is skewed to basic and acidic residues over residues 28 to 41 and 56 to 71; these read EEVR…KEGS and EASH…DSLK. 3 stretches are compositionally biased toward polar residues: residues 72–102, 119–130, and 139–151; these read SDSG…VNKL, DTTNFDRLNDNI, and PVLT…QSQE. At S94 the chain carries Phosphoserine. A compositionally biased stretch (low complexity) spans 165–176; the sequence is SDPSSPNYISSS. A coiled-coil region spans residues 445-915; that stretch reads NEALLLRKQE…ERNSLIKNIV (471 aa). The tract at residues 523–537 is required for interaction with mto2; sequence LMRMEQQWREDVDQL. Positions 1001-1011 are enriched in polar residues; sequence GSTSSIPNSPR. Disordered regions lie at residues 1001 to 1037 and 1067 to 1115; these read GSTS…AVQR and EQEG…QEHK. A phosphoserine mark is found at S1005 and S1009. Basic and acidic residues-rich tracts occupy residues 1016-1025 and 1067-1084; these read VSLDSEDKKL and EQEG…RLQD. A coiled-coil region spans residues 1072–1102; it reads KRDKLGARERLQDLIRQNRSLSRQIKTDKES. Polar residues-rich tracts occupy residues 1086–1095 and 1104–1115; these read IRQNRSLSRQ and SRSPSISSQEHK.

As to quaternary structure, interacts with mto2; the interaction is direct and required for efficient binding to the gamma-tubulin complex. Interacts with gamma tubulin complex subunits alp4, alp6 and gtb1. Interacts with mcp6.

It is found in the cytoplasm. The protein resides in the cytoskeleton. The protein localises to the microtubule organizing center. Its subcellular location is the spindle pole body. Functionally, spindle pole body (SPB) component that acts as the gamma-tubulin complex-binding protein of the SPB outer plaque. Promotes nucleation of all cytoplasmic microtubules by recruiting the gamma-tubulin complex to the spindle pole body (SPB), to the interphase microtubule organizing center (iMTOC), and to the equatorial MTOC (eMTOC) during anaphase. This Schizosaccharomyces pombe (strain 972 / ATCC 24843) (Fission yeast) protein is Gamma tubulin complex adapter mto1.